The primary structure comprises 262 residues: Phosphomannomutase 1 (262 aa).

A2 carries the N-acetylalanine modification. The active-site Nucleophile is D19. The Mg(2+) site is built by D19 and D21. The Proton donor/acceptor role is filled by D21. Alpha-D-mannose 1-phosphate-binding residues include R28, R132, R143, R150, M186, S188, and D190. Residues N218, F230, D232, and T235 each coordinate Mg(2+). Residue S242 is modified to Phosphoserine.

This sequence belongs to the eukaryotic PMM family. Homodimer. Mg(2+) is required as a cofactor. In terms of tissue distribution, strong expression in liver, heart, brain, and pancreas; lower expression in skeletal muscle.

The protein localises to the cytoplasm. It carries out the reaction alpha-D-mannose 1-phosphate = D-mannose 6-phosphate. It functions in the pathway nucleotide-sugar biosynthesis; GDP-alpha-D-mannose biosynthesis; alpha-D-mannose 1-phosphate from D-fructose 6-phosphate: step 2/2. IMP, a metabolite whose concentration is elevated in anoxia, inhibits phosphomannomutase and phosphoglucomutase activities and strongly enhances glucose-1,6-bisphosphatase activity. Its function is as follows. Involved in the synthesis of the GDP-mannose and dolichol-phosphate-mannose required for a number of critical mannosyl transfer reactions. In addition, may be responsible for the degradation of glucose-1,6-bisphosphate in ischemic brain. This chain is Phosphomannomutase 1 (PMM1), found in Homo sapiens (Human).